The following is a 209-amino-acid chain: Immunoglobulin lambda-like polypeptide 1 (209 aa).

Positions 1 to 30 are cleaved as a signal peptide; it reads MKLRVGQTLGTIPRQCEVLLLLLLLGLVDG. The segment at 93–104 is j region; sequence VFGGGTQLTILG. The interval 105 to 209 is c region; the sequence is QPKSDPLVTL…EKSVSPAECS (105 aa). The Ig-like C1-type domain occupies 110–204; sequence PLVTLFLPSL…EGNTVEKSVS (95 aa). Cys131 and Cys190 form a disulfide bridge.

As to quaternary structure, interacts with VPREB1A. Interacts with SYNV1/HRD1 (via N-terminus); this interaction leads to increased IGLL1 ubiquitination and degradation in pre-B cells, possibly through a lysosomal, not proteasomal, pathway. In terms of tissue distribution, selectively expressed in pre-B lymphocytes.

It is found in the endoplasmic reticulum. The protein resides in the secreted. Critical for B-cell development. The chain is Immunoglobulin lambda-like polypeptide 1 (Igll1) from Mus musculus (Mouse).